A 299-amino-acid polypeptide reads, in one-letter code: NAD kinase (299 aa).

Catalysis depends on Asp-78, which acts as the Proton acceptor. Residues 78–79 (DG), 151–152 (ND), Lys-162, Arg-179, Asp-181, 192–197 (TAYALS), and Gln-252 each bind NAD(+).

It belongs to the NAD kinase family. A divalent metal cation serves as cofactor.

The protein localises to the cytoplasm. The catalysed reaction is NAD(+) + ATP = ADP + NADP(+) + H(+). Involved in the regulation of the intracellular balance of NAD and NADP, and is a key enzyme in the biosynthesis of NADP. Catalyzes specifically the phosphorylation on 2'-hydroxyl of the adenosine moiety of NAD to yield NADP. The protein is NAD kinase of Coxiella burnetii (strain CbuG_Q212) (Coxiella burnetii (strain Q212)).